The chain runs to 476 residues: Serine--tRNA ligase (476 aa).

279–281 is a binding site for L-serine; it reads TAE. An ATP-binding site is contributed by 310 to 312; it reads RAE. L-serine is bound at residue E333. 400-403 lines the ATP pocket; that stretch reads EISS. Position 435 (S435) interacts with L-serine.

It belongs to the class-II aminoacyl-tRNA synthetase family. Type-1 seryl-tRNA synthetase subfamily. As to quaternary structure, homodimer. The tRNA molecule binds across the dimer.

The protein localises to the cytoplasm. The catalysed reaction is tRNA(Ser) + L-serine + ATP = L-seryl-tRNA(Ser) + AMP + diphosphate + H(+). It catalyses the reaction tRNA(Sec) + L-serine + ATP = L-seryl-tRNA(Sec) + AMP + diphosphate + H(+). The protein operates within aminoacyl-tRNA biosynthesis; selenocysteinyl-tRNA(Sec) biosynthesis; L-seryl-tRNA(Sec) from L-serine and tRNA(Sec): step 1/1. Functionally, catalyzes the attachment of serine to tRNA(Ser). Is also able to aminoacylate tRNA(Sec) with serine, to form the misacylated tRNA L-seryl-tRNA(Sec), which will be further converted into selenocysteinyl-tRNA(Sec). The chain is Serine--tRNA ligase from Rhodopseudomonas palustris (strain BisA53).